The sequence spans 277 residues: Protein EURL homolog (277 aa).

Residues 173-201 (LGLWPGERPQNREQRDSRQRRHSGHSREE) form a disordered region. A coiled-coil region spans residues 197–229 (HSREELMRKNVEELRQLNEQLLLQIQNVFEELS).

This sequence belongs to the EURL family.

In terms of biological role, plays a role in cortical progenitor cell proliferation and differentiation. May promote dendritic spine development of post-migratory cortical projection neurons by modulating the beta-catenin signaling pathway. The polypeptide is Protein EURL homolog (Danio rerio (Zebrafish)).